Here is a 109-residue protein sequence, read N- to C-terminus: Large ribosomal subunit protein P1 (109 aa).

The disordered stretch occupies residues 71–109; that stretch reads APAAASSAPAKKEEPKKEEPKKEEPKEEETDMDMGDLFG. Residues 80–95 show a composition bias toward basic and acidic residues; the sequence is AKKEEPKKEEPKKEEP. 3 tandem repeats follow at residues 81-85, 86-90, and 91-95. Positions 81–95 are 3 X 5 AA tandem repeats of K-K-E-E-P; it reads KKEEPKKEEPKKEEP. Residues 96 to 109 are compositionally biased toward acidic residues; that stretch reads KEEETDMDMGDLFG.

It belongs to the eukaryotic ribosomal protein P1/P2 family. Post-translationally, not phosphorylated.

The polypeptide is Large ribosomal subunit protein P1 (RPLP1) (Tetrahymena thermophila).